The sequence spans 930 residues: Isoleucine--tRNA ligase (930 aa).

A 'HIGH' region motif is present at residues 57-67 (PYANGNIHVGH). Glu554 is an L-isoleucyl-5'-AMP binding site. The 'KMSKS' region signature appears at 595–599 (KMSKS). Position 598 (Lys598) interacts with ATP. The Zn(2+) site is built by Cys888, Cys891, Cys908, and Cys911.

Belongs to the class-I aminoacyl-tRNA synthetase family. IleS type 1 subfamily. Monomer. Zn(2+) serves as cofactor.

The protein localises to the cytoplasm. The catalysed reaction is tRNA(Ile) + L-isoleucine + ATP = L-isoleucyl-tRNA(Ile) + AMP + diphosphate. Functionally, catalyzes the attachment of isoleucine to tRNA(Ile). As IleRS can inadvertently accommodate and process structurally similar amino acids such as valine, to avoid such errors it has two additional distinct tRNA(Ile)-dependent editing activities. One activity is designated as 'pretransfer' editing and involves the hydrolysis of activated Val-AMP. The other activity is designated 'posttransfer' editing and involves deacylation of mischarged Val-tRNA(Ile). The polypeptide is Isoleucine--tRNA ligase (Streptococcus mutans serotype c (strain ATCC 700610 / UA159)).